A 347-amino-acid polypeptide reads, in one-letter code: MCSLITQLCDAGQLADYVGLGWLNAVSSQPYLVQALGLQPPPRRVDVDAAFRDAKGLHGHQPWVATPLPGQTVRALFIGINYYGTSAALSGCCNDVKQMLATLQKKGLPINEAVILVDEDNFPGRTDQPTRDNIVRYMAWLVKDAKPGDVLFFHYSGHGTQCKSRGDSDEKYDQCIAPVDFQKSGCIVDDDIHKLLFSRLPEKVRLTAVFDCCHSGSIMDLPFTYVCSGGEQASGTPHMKRIREGNDVLGDVMMISGCADEQTSADVKNTATFGTGSTGAGGAATQCITCMLMNNQSLSYGKLLIETRDMLKRKGFKQVPQLSASKAIDLDQTFSLTEMFSVDRSIQ.

Residues Met1 to Lys55 constitute a propeptide that is removed on maturation. Residues Met1–Gly70 are regulates substrate access to the active site. Residue His158 is part of the active site. Ca(2+) is bound by residues Asp173, Asp189, and Asp190. Cys213 is an active-site residue. Asp220 lines the Ca(2+) pocket.

Belongs to the peptidase C14B family. Monomer. Auto-proteolytic cleavage of the propeptide after Lys-55 and between the large and small subunits after Lys-268 is required for catalytic activity towards large protein substrates but is dispensable towards small oligopeptide substrates. After processing, the propeptide and the large and small subunits remain associated by non-covalent bonds. In vivo, the unprocessed enzyme appears to be the predominant form.

It is found in the recycling endosome. With respect to regulation, activated by Ca(2+). In response to calcium binding, the 280-loop, a disordered loop consisting of residues 269-275, undergoes a conformational change which stabilizes substrates in the active site. The binding to the substrate triggers the release of the N-terminal region resulting in the activation of the enzyme. Proteolytic cleavage is required for catalytic activity towards large protein substrates. Its function is as follows. Cysteine protease that cleaves specifically after arginine or lysine residues. In Trypanosoma brucei brucei (strain 927/4 GUTat10.1), this protein is Metacaspase-2.